We begin with the raw amino-acid sequence, 188 residues long: Elongation factor P (188 aa).

The residue at position 34 (K34) is an N6-(3,6-diaminohexanoyl)-5-hydroxylysine.

The protein belongs to the elongation factor P family. In terms of processing, may be beta-lysylated on the epsilon-amino group of Lys-34 by the combined action of EpmA and EpmB, and then hydroxylated on the C5 position of the same residue by EpmC (if this protein is present). Lysylation is critical for the stimulatory effect of EF-P on peptide-bond formation. The lysylation moiety may extend toward the peptidyltransferase center and stabilize the terminal 3-CCA end of the tRNA. Hydroxylation of the C5 position on Lys-34 may allow additional potential stabilizing hydrogen-bond interactions with the P-tRNA.

It localises to the cytoplasm. It participates in protein biosynthesis; polypeptide chain elongation. Involved in peptide bond synthesis. Alleviates ribosome stalling that occurs when 3 or more consecutive Pro residues or the sequence PPG is present in a protein, possibly by augmenting the peptidyl transferase activity of the ribosome. Modification of Lys-34 is required for alleviation. The sequence is that of Elongation factor P from Sodalis glossinidius (strain morsitans).